The primary structure comprises 338 residues: Fructose-bisphosphate aldolase (338 aa).

Positions 50 and 138 each coordinate substrate. E179 acts as the Proton acceptor in catalysis. Residue K221 is the Schiff-base intermediate with dihydroxyacetone-P of the active site.

Belongs to the class I fructose-bisphosphate aldolase family.

It carries out the reaction beta-D-fructose 1,6-bisphosphate = D-glyceraldehyde 3-phosphate + dihydroxyacetone phosphate. The protein operates within carbohydrate degradation; glycolysis; D-glyceraldehyde 3-phosphate and glycerone phosphate from D-glucose: step 4/4. This Encephalitozoon cuniculi (strain GB-M1) (Microsporidian parasite) protein is Fructose-bisphosphate aldolase.